Reading from the N-terminus, the 461-residue chain is ADP-specific phosphofructokinase (461 aa).

An ADPK domain is found at 1–457 (MVRELLEKAR…FASYLAMLKE (457 aa)). 3 residues coordinate Mg(2+): Glu268, Glu298, and Asp441. Residue Asp441 is the Proton acceptor of the active site.

It belongs to the carbohydrate kinase PfkC family. The cofactor is Mg(2+).

The protein resides in the cytoplasm. The enzyme catalyses beta-D-fructose 6-phosphate + ADP = beta-D-fructose 1,6-bisphosphate + AMP + H(+). It functions in the pathway carbohydrate degradation; glycolysis. Catalyzes the phosphorylation of fructose 6-phosphate to fructose 1,6-bisphosphate using ADP as the phosphate donor. The polypeptide is ADP-specific phosphofructokinase (Thermococcus zilligii).